Reading from the N-terminus, the 688-residue chain is Elongation factor G (688 aa).

One can recognise a tr-type G domain in the interval Glu-8–Met-282. Residues Ala-17–Thr-24, Asp-81–His-85, and Asn-135–Asp-138 contribute to the GTP site.

The protein belongs to the TRAFAC class translation factor GTPase superfamily. Classic translation factor GTPase family. EF-G/EF-2 subfamily.

It is found in the cytoplasm. In terms of biological role, catalyzes the GTP-dependent ribosomal translocation step during translation elongation. During this step, the ribosome changes from the pre-translocational (PRE) to the post-translocational (POST) state as the newly formed A-site-bound peptidyl-tRNA and P-site-bound deacylated tRNA move to the P and E sites, respectively. Catalyzes the coordinated movement of the two tRNA molecules, the mRNA and conformational changes in the ribosome. In Apple proliferation phytoplasma, this protein is Elongation factor G (fusA).